We begin with the raw amino-acid sequence, 393 residues long: Carbamoyl phosphate synthase small chain (393 aa).

The segment at 1-194 is CPSase; the sequence is MSKDTTTYQG…TYVIEAEGEE (194 aa). L-glutamine-binding residues include Ser61, Gly245, and Gly247. The 196-residue stretch at 195 to 390 folds into the Glutamine amidotransferase type-1 domain; it reads RHTVVAYDLG…VELMDADAQK (196 aa). The active-site Nucleophile is Cys273. Residues Phe274, Gln277, Asn315, Gly317, and Phe318 each coordinate L-glutamine. Catalysis depends on residues His363 and Glu365.

It belongs to the CarA family. Composed of two chains; the small (or glutamine) chain promotes the hydrolysis of glutamine to ammonia, which is used by the large (or ammonia) chain to synthesize carbamoyl phosphate. Tetramer of heterodimers (alpha,beta)4.

It carries out the reaction hydrogencarbonate + L-glutamine + 2 ATP + H2O = carbamoyl phosphate + L-glutamate + 2 ADP + phosphate + 2 H(+). The enzyme catalyses L-glutamine + H2O = L-glutamate + NH4(+). The protein operates within amino-acid biosynthesis; L-arginine biosynthesis; carbamoyl phosphate from bicarbonate: step 1/1. It functions in the pathway pyrimidine metabolism; UMP biosynthesis via de novo pathway; (S)-dihydroorotate from bicarbonate: step 1/3. In terms of biological role, small subunit of the glutamine-dependent carbamoyl phosphate synthetase (CPSase). CPSase catalyzes the formation of carbamoyl phosphate from the ammonia moiety of glutamine, carbonate, and phosphate donated by ATP, constituting the first step of 2 biosynthetic pathways, one leading to arginine and/or urea and the other to pyrimidine nucleotides. The small subunit (glutamine amidotransferase) binds and cleaves glutamine to supply the large subunit with the substrate ammonia. The sequence is that of Carbamoyl phosphate synthase small chain from Corynebacterium glutamicum (strain ATCC 13032 / DSM 20300 / JCM 1318 / BCRC 11384 / CCUG 27702 / LMG 3730 / NBRC 12168 / NCIMB 10025 / NRRL B-2784 / 534).